The primary structure comprises 228 residues: UPF0758 protein NT01CX_1687 (228 aa).

The 123-residue stretch at 106 to 228 (IIKSPGDVAG…YISLKEKNIL (123 aa)) folds into the MPN domain. Residues His-177, His-179, and Asp-190 each coordinate Zn(2+). A JAMM motif motif is present at residues 177–190 (HNHPSGDPTPSSED).

It belongs to the UPF0758 family.

This is UPF0758 protein NT01CX_1687 from Clostridium novyi (strain NT).